Consider the following 145-residue polypeptide: D-aminoacyl-tRNA deacylase (145 aa).

Positions Gly-137–Pro-138 match the Gly-cisPro motif, important for rejection of L-amino acids motif.

Belongs to the DTD family. Homodimer.

It localises to the cytoplasm. The enzyme catalyses glycyl-tRNA(Ala) + H2O = tRNA(Ala) + glycine + H(+). It catalyses the reaction a D-aminoacyl-tRNA + H2O = a tRNA + a D-alpha-amino acid + H(+). In terms of biological role, an aminoacyl-tRNA editing enzyme that deacylates mischarged D-aminoacyl-tRNAs. Also deacylates mischarged glycyl-tRNA(Ala), protecting cells against glycine mischarging by AlaRS. Acts via tRNA-based rather than protein-based catalysis; rejects L-amino acids rather than detecting D-amino acids in the active site. By recycling D-aminoacyl-tRNA to D-amino acids and free tRNA molecules, this enzyme counteracts the toxicity associated with the formation of D-aminoacyl-tRNA entities in vivo and helps enforce protein L-homochirality. This is D-aminoacyl-tRNA deacylase from Legionella pneumophila (strain Paris).